A 443-amino-acid chain; its full sequence is Glutamine synthetase (443 aa).

The GS beta-grasp domain occupies 11–97 (VQVEVPRPRF…VYGYIYKGDE (87 aa)). One can recognise a GS catalytic domain in the interval 103 to 443 (PRGILKRVLE…EWELERYFYV (341 aa)). Positions 126 and 128 each coordinate Mg(2+). Residue E176 participates in ATP binding. Mg(2+) is bound by residues E181 and E188. G233 contributes to the L-glutamate binding site. H237 provides a ligand contact to Mg(2+). Residues 239-241 (HIS) and S241 each bind ATP. Residues R287, E293, and R305 each contribute to the L-glutamate site. R305 and R310 together coordinate ATP. E322 serves as a coordination point for Mg(2+). Residue R324 participates in L-glutamate binding.

The protein belongs to the glutamine synthetase family. Oligomer of 12 subunits arranged in the form of two hexagons. It depends on Mg(2+) as a cofactor. Requires Mn(2+) as cofactor.

It is found in the cytoplasm. The enzyme catalyses L-glutamate + NH4(+) + ATP = L-glutamine + ADP + phosphate + H(+). It carries out the reaction hydroxylamine + L-glutamate + ATP = L-glutamine hydroxamate + ADP + phosphate. With respect to regulation, the activity of this enzyme is not controlled by adenylation. In terms of biological role, carries out the ATP-dependent synthesis of glutamine from ammonium nitrogen and glutamate. Exhibits both L-gamma-glutamylhydroxamate synthetase and gamma-glutamyltransferase activities when using hydroxylamine as substrate; in fact, the enzyme possesses low biosynthetic activity, suggesting that the reaction is biased towards the degradation of glutamine under ammonia-rich conditions. Might play some role in ammonia assimilation under ammonia-starvation conditions. Can also use GTP instead of ATP in the synthetase reaction, but not CTP or UTP. The polypeptide is Glutamine synthetase (Thermococcus kodakarensis (strain ATCC BAA-918 / JCM 12380 / KOD1) (Pyrococcus kodakaraensis (strain KOD1))).